Reading from the N-terminus, the 4885-residue chain is Centrosome-associated protein CEP530 (4885 aa).

Residues 1437–1528 (VAEYEAETRG…GREKDQLRSE (92 aa)) adopt a coiled-coil conformation.

The protein resides in the cytoplasm. Its subcellular location is the cytoskeleton. It localises to the microtubule organizing center. It is found in the centrosome. Its function is as follows. Required for proper nuclei segregation during the cell division. Plays a role in coordination of karyokinesis and cytokinesis during the tachyzoite cell cycle. The sequence is that of Centrosome-associated protein CEP530 from Toxoplasma gondii (strain ATCC 50611 / Me49).